Here is a 173-residue protein sequence, read N- to C-terminus: Ribosome maturation factor RimM (173 aa).

The 74-residue stretch at 96–169 (PDEYYDHQLE…LVEIDPPEGL (74 aa)) folds into the PRC barrel domain.

The protein belongs to the RimM family. In terms of assembly, binds ribosomal protein uS19.

Its subcellular location is the cytoplasm. Its function is as follows. An accessory protein needed during the final step in the assembly of 30S ribosomal subunit, possibly for assembly of the head region. Essential for efficient processing of 16S rRNA. May be needed both before and after RbfA during the maturation of 16S rRNA. It has affinity for free ribosomal 30S subunits but not for 70S ribosomes. The chain is Ribosome maturation factor RimM from Mycobacterium sp. (strain JLS).